Reading from the N-terminus, the 460-residue chain is Muscarinic acetylcholine receptor M1 (460 aa).

Over 1–22 (MNTSAPPAVSPNITVLAPGKGP) the chain is Extracellular. 2 N-linked (GlcNAc...) asparagine glycosylation sites follow: asparagine 2 and asparagine 12. The chain crosses the membrane as a helical span at residues 23 to 48 (WQVAFIGITTGLLSLATVTGNLLVLI). At 49–62 (SFKVNTELKTVNNY) the chain is on the cytoplasmic side. Residues 63-84 (FLLSLACADLIIGTFSMNLYTT) form a helical membrane-spanning segment. Topologically, residues 85–95 (YLLMGHWALGT) are extracellular. The helical transmembrane segment at 96–121 (LACDLWLALDYVASNASVMNLLLISF) threads the bilayer. Cysteines 98 and 178 form a disulfide. Residues 122-142 (DRYFSVTRPLSYRAKRTPRRA) lie on the Cytoplasmic side of the membrane. The helical transmembrane segment at 143 to 164 (ALMIGLAWLVSFVLWAPAILFW) threads the bilayer. The Extracellular segment spans residues 165–185 (QYLVGERTVLAGQCYIQFLSQ). Residues 186–209 (PIITFGTAMAAFYLPVTVMCTLYW) form a helical membrane-spanning segment. The Cytoplasmic segment spans residues 210–366 (RIYRETENRA…LVKEKKAART (157 aa)). 3 disordered regions span residues 225–256 (LQGS…ETPP), 274–297 (WKEE…EEPG), and 310–351 (EAQA…QLAK). A Phosphothreonine modification is found at threonine 230. Residues 238 to 247 (SSSSERSQPG) show a composition bias toward low complexity. Residues 328–343 (RPTKKGRDRAGKGQKP) show a composition bias toward basic residues. A helical transmembrane segment spans residues 367-390 (LSAILLAFILTWTPYNIMVLVSTF). The Extracellular segment spans residues 391-397 (CKDCVPE). Residues 398-420 (TLWELGYWLCYVNSTINPMCYAL) form a helical membrane-spanning segment. Over 421–460 (CNKAFRDTFRLLLLCRWDKRRWRKIPKRPGSVHRTPSRQC) the chain is Cytoplasmic. Position 428 is a phosphothreonine (threonine 428). Serine 451 bears the Phosphoserine mark. Threonine 455 carries the post-translational modification Phosphothreonine. Residue serine 457 is modified to Phosphoserine.

This sequence belongs to the G-protein coupled receptor 1 family. Muscarinic acetylcholine receptor subfamily. CHRM1 sub-subfamily. As to quaternary structure, interacts with GPRASP2. Interacts with TMEM147.

It localises to the cell membrane. The protein resides in the postsynaptic cell membrane. Its function is as follows. The muscarinic acetylcholine receptor mediates various cellular responses, including inhibition of adenylate cyclase, breakdown of phosphoinositides and modulation of potassium channels through the action of G proteins. Primary transducing effect is Pi turnover. This chain is Muscarinic acetylcholine receptor M1 (CHRM1), found in Homo sapiens (Human).